A 183-amino-acid chain; its full sequence is Ribosome maturation factor RimP (183 aa).

This sequence belongs to the RimP family.

It is found in the cytoplasm. Functionally, required for maturation of 30S ribosomal subunits. In Mycobacterium bovis (strain ATCC BAA-935 / AF2122/97), this protein is Ribosome maturation factor RimP.